Reading from the N-terminus, the 78-residue chain is Probable [Fe-S]-dependent transcriptional repressor (78 aa).

The iron-sulfur cluster site is built by Cys56, Cys61, Cys64, and Cys70.

The protein belongs to the FeoC family.

May function as a transcriptional regulator that controls feoABC expression. The sequence is that of Probable [Fe-S]-dependent transcriptional repressor from Salmonella agona (strain SL483).